Here is a 450-residue protein sequence, read N- to C-terminus: Signal recognition particle 54 kDa protein (450 aa).

Residues glycine 107–threonine 114, aspartate 188–arginine 192, and threonine 247–aspartate 250 contribute to the GTP site.

The protein belongs to the GTP-binding SRP family. SRP54 subfamily. As to quaternary structure, part of the signal recognition particle protein translocation system, which is composed of SRP and FtsY. Archaeal SRP consists of a 7S RNA molecule of 300 nucleotides and two protein subunits: SRP54 and SRP19.

The protein localises to the cytoplasm. It carries out the reaction GTP + H2O = GDP + phosphate + H(+). In terms of biological role, involved in targeting and insertion of nascent membrane proteins into the cytoplasmic membrane. Binds to the hydrophobic signal sequence of the ribosome-nascent chain (RNC) as it emerges from the ribosomes. The SRP-RNC complex is then targeted to the cytoplasmic membrane where it interacts with the SRP receptor FtsY. The polypeptide is Signal recognition particle 54 kDa protein (Methanococcus maripaludis (strain C6 / ATCC BAA-1332)).